A 337-amino-acid polypeptide reads, in one-letter code: Formamidase (337 aa).

The CN hydrolase domain maps to 14 to 257; sequence VVIGLVQLQL…DEIITAEVRP (244 aa). E60 acts as the Proton acceptor in catalysis. K129 (proton donor) is an active-site residue. C162 (nucleophile) is an active-site residue.

Belongs to the carbon-nitrogen hydrolase superfamily. Aliphatic amidase family.

It catalyses the reaction formamide + H2O = formate + NH4(+). In terms of biological role, is an aliphatic amidase with a restricted substrate specificity, as it only hydrolyzes formamide. The protein is Formamidase of Bradyrhizobium sp. (strain ORS 278).